The primary structure comprises 116 residues: MDGSVGTGRQVGEIGAHVKGHNQNSVGICLVGGITASGKNHGEYTEAQWQSLYKLLQELEAEHPKALICGHRDLSPDLNGDGVITPKEWLKDCPCFDVWSWLDSEQVVNLDHLYKE.

The 72-residue stretch at 2 to 73 folds into the N-acetylmuramoyl-L-alanine amidase domain; that stretch reads DGSVGTGRQV…PKALICGHRD (72 aa).

The protein to phage T3 and T7 N-acetylmuramoyl-L-alanine amidases.

This is an uncharacterized protein from Haemophilus influenzae (strain ATCC 51907 / DSM 11121 / KW20 / Rd).